A 450-amino-acid chain; its full sequence is FAD-linked oxidoreductase penO (450 aa).

Positions 32 to 203 constitute an FAD-binding PCMH-type domain; it reads PPELPYAIVK…TRFFIRTRPA (172 aa).

Belongs to the oxygen-dependent FAD-linked oxidoreductase family. It depends on FAD as a cofactor.

It functions in the pathway secondary metabolite biosynthesis. In terms of biological role, FAD-linked oxidoreductase; part of the gene cluster that mediates the biosynthesis of the indole diterpenes penitrems. The geranylgeranyl diphosphate (GGPP) synthase penG catalyzes the first step in penitrem biosynthesis via conversion of farnesyl pyrophosphate and isopentyl pyrophosphate into geranylgeranyl pyrophosphate (GGPP). Condensation of indole-3-glycerol phosphate with GGPP by the prenyl transferase penC then forms 3-geranylgeranylindole (3-GGI). Epoxidation by the FAD-dependent monooxygenase penM leads to a epoxidized-GGI that is substrate of the terpene cyclase penB for cyclization to yield paspaline. Paspaline is subsequently converted to 13-desoxypaxilline by the cytochrome P450 monooxygenase penP, the latter being then converted to paxilline by the cytochrome P450 monooxygenase penQ. Paxilline is converted to beta-paxitriol via C-10 ketoreduction by the short-chain dehydrogenase PC-15 which can be monoprenylated at the C-20 by the indole diterpene prenyltransferase penD. A two-step elimination (acetylation and elimination) process performed by the O-acetyltransferase PC-16 and the P.simplicissimum ptmI-ortholog not yet identified in P.crustosum, leads to the production of the prenylated form of penijanthine. The FAD-linked oxidoreductase ptmO then converts the prenylated form of penijanthine into PC-M5 which is in turn transformed into PC-M4 by the aromatic dimethylallyltransferase PC-22. A series of oxidation steps involving 4 cytochrome P450 monooxygenases (PC-21, PC-05, PC-23, PC-20) and a FAD-dependent monooxygenase (PC-14) are required for the transformation of PC-M4 to penitrems A and E. Synthesis of these final products is proposed to proceed via penitrems D and C (PC-21, PC-05, PC-14) and penitrems B and F (PC-21, PC-05, PC-14, PC-23). The sequence is that of FAD-linked oxidoreductase penO from Penicillium crustosum (Blue mold fungus).